Consider the following 658-residue polypeptide: ATP-dependent DNA helicase Rep (658 aa).

One can recognise a UvrD-like helicase ATP-binding domain in the interval 1 to 280; it reads MSLNFNQKNA…IKMEQNYRSY (280 aa). ATP-binding positions include 22–29 and arginine 278; that span reads AGAGSGKT. Residues 281–564 enclose the UvrD-like helicase C-terminal domain; the sequence is GRILKAANKL…QLMTLHSSKG (284 aa).

Belongs to the helicase family. UvrD subfamily. Homodimer.

It catalyses the reaction Couples ATP hydrolysis with the unwinding of duplex DNA by translocating in the 3'-5' direction.. It carries out the reaction ATP + H2O = ADP + phosphate + H(+). Functionally, rep helicase is a single-stranded DNA-dependent ATPase involved in DNA replication; it can initiate unwinding at a nick in the DNA. It binds to the single-stranded DNA and acts in a progressive fashion along the DNA in the 3' to 5' direction. In Buchnera aphidicola subsp. Schizaphis graminum (strain Sg), this protein is ATP-dependent DNA helicase Rep.